Reading from the N-terminus, the 475-residue chain is Ribulose bisphosphate carboxylase large chain (475 aa).

Positions 1 to 2 (MS) are excised as a propeptide. Pro-3 carries the N-acetylproline modification. Lys-14 is modified (N6,N6,N6-trimethyllysine). Residues Asn-123 and Thr-173 each coordinate substrate. The active-site Proton acceptor is Lys-175. A substrate-binding site is contributed by Lys-177. Mg(2+) contacts are provided by Lys-201, Asp-203, and Glu-204. Lys-201 is subject to N6-carboxylysine. His-294 serves as the catalytic Proton acceptor. Residues Arg-295, His-327, and Ser-379 each contribute to the substrate site.

The protein belongs to the RuBisCO large chain family. Type I subfamily. As to quaternary structure, heterohexadecamer of 8 large chains and 8 small chains; disulfide-linked. The disulfide link is formed within the large subunit homodimers. Mg(2+) serves as cofactor. In terms of processing, the disulfide bond which can form in the large chain dimeric partners within the hexadecamer appears to be associated with oxidative stress and protein turnover.

It is found in the plastid. Its subcellular location is the chloroplast. It carries out the reaction 2 (2R)-3-phosphoglycerate + 2 H(+) = D-ribulose 1,5-bisphosphate + CO2 + H2O. It catalyses the reaction D-ribulose 1,5-bisphosphate + O2 = 2-phosphoglycolate + (2R)-3-phosphoglycerate + 2 H(+). Its function is as follows. RuBisCO catalyzes two reactions: the carboxylation of D-ribulose 1,5-bisphosphate, the primary event in carbon dioxide fixation, as well as the oxidative fragmentation of the pentose substrate in the photorespiration process. Both reactions occur simultaneously and in competition at the same active site. In Piper cenocladum (Ant piper), this protein is Ribulose bisphosphate carboxylase large chain.